The primary structure comprises 101 residues: UPF0235 protein Maeo_0841 (101 aa).

This sequence belongs to the UPF0235 family.

The protein is UPF0235 protein Maeo_0841 of Methanococcus aeolicus (strain ATCC BAA-1280 / DSM 17508 / OCM 812 / Nankai-3).